The following is a 489-amino-acid chain: Dihydropyrimidinase 1 (489 aa).

Residues His61, His63, and Lys156 each coordinate Zn(2+). The residue at position 156 (Lys156) is an N6-carboxylysine. Tyr161 is a substrate binding site. Zn(2+)-binding residues include His189 and His245. Ser295 serves as a coordination point for substrate. A Zn(2+)-binding site is contributed by Asp323. Asn344 contacts substrate.

It belongs to the metallo-dependent hydrolases superfamily. Hydantoinase/dihydropyrimidinase family. Homotetramer. Zn(2+) is required as a cofactor. Post-translationally, carboxylation allows a single lysine to coordinate two zinc ions.

It localises to the nucleus. It catalyses the reaction 5,6-dihydrouracil + H2O = 3-(carbamoylamino)propanoate + H(+). This is Dihydropyrimidinase 1 (dhp-1) from Caenorhabditis briggsae.